We begin with the raw amino-acid sequence, 428 residues long: L-rhamnose isomerase (428 aa).

Positions 260, 292, and 294 each coordinate Mn(2+).

It belongs to the rhamnose isomerase family. Mn(2+) is required as a cofactor.

It is found in the cytoplasm. It carries out the reaction L-rhamnopyranose = L-rhamnulose. It functions in the pathway carbohydrate degradation; L-rhamnose degradation; glycerone phosphate from L-rhamnose: step 1/3. Functionally, catalyzes the interconversion of L-rhamnose and L-rhamnulose. In Enterococcus faecalis (strain ATCC 700802 / V583), this protein is L-rhamnose isomerase.